The chain runs to 65 residues: UPF0434 protein HSM_0997 (65 aa).

It belongs to the UPF0434 family.

In Histophilus somni (strain 2336) (Haemophilus somnus), this protein is UPF0434 protein HSM_0997.